A 417-amino-acid polypeptide reads, in one-letter code: DNA primase DnaG (417 aa).

Positions 171-257 (DAIIIVEGRA…SVEDMARKEI (87 aa)) constitute a Toprim domain. 3 residues coordinate Mg(2+): glutamate 177, aspartate 219, and aspartate 221. The tract at residues 278 to 325 (VPGEKRTQDLRPQKPGASEQNSIKKENVENENESTPTSFEPISEPAPP) is disordered. Residues 279–289 (PGEKRTQDLRP) show a composition bias toward basic and acidic residues.

It belongs to the archaeal DnaG primase family. As to quaternary structure, forms a ternary complex with MCM helicase and DNA. The cofactor is Mg(2+).

It carries out the reaction ssDNA + n NTP = ssDNA/pppN(pN)n-1 hybrid + (n-1) diphosphate.. Functionally, RNA polymerase that catalyzes the synthesis of short RNA molecules used as primers for DNA polymerase during DNA replication. The chain is DNA primase DnaG from Methanosphaerula palustris (strain ATCC BAA-1556 / DSM 19958 / E1-9c).